Reading from the N-terminus, the 947-residue chain is Bifunctional glutamine synthetase adenylyltransferase/adenylyl-removing enzyme (947 aa).

The segment at 1–440 (MTPLSSPLSQ…VFNELIGDDE (440 aa)) is adenylyl removase. The interval 450–947 (SEPWREVWQD…ASWRKWLVAV (498 aa)) is adenylyl transferase.

This sequence belongs to the GlnE family. Mg(2+) is required as a cofactor.

It carries out the reaction [glutamine synthetase]-O(4)-(5'-adenylyl)-L-tyrosine + phosphate = [glutamine synthetase]-L-tyrosine + ADP. The enzyme catalyses [glutamine synthetase]-L-tyrosine + ATP = [glutamine synthetase]-O(4)-(5'-adenylyl)-L-tyrosine + diphosphate. In terms of biological role, involved in the regulation of glutamine synthetase GlnA, a key enzyme in the process to assimilate ammonia. When cellular nitrogen levels are high, the C-terminal adenylyl transferase (AT) inactivates GlnA by covalent transfer of an adenylyl group from ATP to specific tyrosine residue of GlnA, thus reducing its activity. Conversely, when nitrogen levels are low, the N-terminal adenylyl removase (AR) activates GlnA by removing the adenylyl group by phosphorolysis, increasing its activity. The regulatory region of GlnE binds the signal transduction protein PII (GlnB) which indicates the nitrogen status of the cell. The chain is Bifunctional glutamine synthetase adenylyltransferase/adenylyl-removing enzyme from Salmonella paratyphi C (strain RKS4594).